An 811-amino-acid polypeptide reads, in one-letter code: TLR4 interactor with leucine rich repeats (811 aa).

An N-terminal signal peptide occupies residues M1 to P25. Residues V26–S57 form the LRRNT domain. Residues V26–Q696 are Extracellular-facing. LRR repeat units lie at residues V61–R81, Q84–K105, R108–P129, K132–G153, S156–P177, N180–Q201, K204–A223, S230–H251, R254–G275, A278–P299, S302–H323, and R326–A347. Residue N73 is glycosylated (N-linked (GlcNAc...) asparagine). An N-linked (GlcNAc...) asparagine glycan is attached at N209. An LRRCT domain is found at N359–D416. Residues L484–R549 are disordered. Low complexity-rich tracts occupy residues Q492–S508 and P530–G544. N589 is a glycosylation site (N-linked (GlcNAc...) asparagine). The helical transmembrane segment at L697–W717 threads the bilayer. The Cytoplasmic segment spans residues A718–D811. A Phosphoserine modification is found at S798.

Belongs to the lipopolysaccharide (LPS) receptor, a multi-protein complex containing at least CD14, MD-2 and TLR4. Interacts with TLR4; this interaction is greatly enhanced by LPS stimulation. Interacts with LPS. Post-translationally, N-glycolysaled. In terms of tissue distribution, highly expressed in the brain, ovary, small intestine and spleen.

The protein localises to the membrane. In terms of biological role, component of the TLR4 signaling complex. Mediates the innate immune response to bacterial lipopolysaccharide (LPS) leading to cytokine secretion. The polypeptide is TLR4 interactor with leucine rich repeats (TRIL) (Homo sapiens (Human)).